The chain runs to 615 residues: MFS-type transporter 1 (615 aa).

Residues 1 to 85 (MTALAAVPDL…GNNVSPHGRH (85 aa)) are disordered. Residues 16–53 (PSTTTVHSPNYSGSPADISSSPTTRAVSRNTARQTASA) are compositionally biased toward polar residues. Asn-25 is a glycosylation site (N-linked (GlcNAc...) asparagine). The next 6 helical transmembrane spans lie at 94 to 114 (CLVIATLSGVSFLNTMGSGIL), 138 to 158 (VYSLAAGCTLLVFGAVGHIIG), 162 to 182 (VWITGACLYAAFTLGVGRSAT), 192 to 212 (VLGVSIAMCLPTAVSLTTNGF), 222 to 242 (FAFQGMGQPLGYSTGLILGGI), and 251 to 271 (FGFYISGGINAVLAICALVVL). The N-linked (GlcNAc...) asparagine glycan is linked to Asn-302. 8 helical membrane-spanning segments follow: residues 320–340 (WTGTLAISASMGFLSYVFSVV), 351–371 (QNIALLVAAALLLPTFTLWVG), 397–417 (AAVFFTWAVFNAFQYFSALYF), 432–452 (FLPMVLVGAATNIVTGYLVET), 455–475 (VRWLVVVSAIFSLFSPLIMAL), 488–508 (FAMLLSPLHPDVLFTVSNLII), 522–542 (AVFNAVSQVGNSVGLGLTAVV), and 585–605 (AAFWLMFGAAALVTVITFLGL).

This sequence belongs to the major facilitator superfamily. EmrB family.

It is found in the membrane. Functionally, MFS-type transporter; part of the gene cluster that mediates the biosynthesis of pyriculol and pyriculariol, two heptaketides that induce lesion formation upon application on rice leaves but are dispensable for pathogenicity. With the ABC transporter ABC7, is most likely responsible for pyriculol and pyriculariol secretion and thereby may contribute to intrinsic resistance. This is MFS-type transporter 1 from Pyricularia oryzae (strain 70-15 / ATCC MYA-4617 / FGSC 8958) (Rice blast fungus).